Consider the following 551-residue polypeptide: RanBD1 domain-containing protein C584.03c (551 aa).

The RanBD1 domain maps to 1 to 309 (MDELLNVASH…LLLKYADDET (309 aa)). Ser441 bears the Phosphoserine mark. The tract at residues 522–551 (SVIPHSEPESSSKVINCQAKLNVEKEKKNP) is disordered.

It localises to the nucleus. The protein is RanBD1 domain-containing protein C584.03c of Schizosaccharomyces pombe (strain 972 / ATCC 24843) (Fission yeast).